Here is a 230-residue protein sequence, read N- to C-terminus: Sugar fermentation stimulation protein homolog (230 aa).

It belongs to the SfsA family.

This Clostridium botulinum (strain Okra / Type B1) protein is Sugar fermentation stimulation protein homolog.